The following is a 141-amino-acid chain: Nucleoside diphosphate kinase (141 aa).

6 residues coordinate ATP: K11, F59, R87, T93, R104, and N114. Residue H117 is the Pros-phosphohistidine intermediate of the active site.

This sequence belongs to the NDK family. Homotetramer. It depends on Mg(2+) as a cofactor.

The protein localises to the cytoplasm. It catalyses the reaction a 2'-deoxyribonucleoside 5'-diphosphate + ATP = a 2'-deoxyribonucleoside 5'-triphosphate + ADP. The catalysed reaction is a ribonucleoside 5'-diphosphate + ATP = a ribonucleoside 5'-triphosphate + ADP. Its function is as follows. Major role in the synthesis of nucleoside triphosphates other than ATP. The ATP gamma phosphate is transferred to the NDP beta phosphate via a ping-pong mechanism, using a phosphorylated active-site intermediate. In Vibrio parahaemolyticus serotype O3:K6 (strain RIMD 2210633), this protein is Nucleoside diphosphate kinase.